A 743-amino-acid chain; its full sequence is Polyribonucleotide nucleotidyltransferase (743 aa).

Mg(2+) is bound by residues Asp-489 and Asp-495. Positions 556 to 618 (PRIEKMHIGK…PCIDAAIGMI (63 aa)) constitute a KH domain. The 71-residue stretch at 628-698 (GETYPGKITS…KTGKFKLSRK (71 aa)) folds into the S1 motif domain. Residues 704-743 (PEGYVEPQPRERRERREGGREGGRNFERRGGDRDHREPRG) are disordered.

It belongs to the polyribonucleotide nucleotidyltransferase family. Mg(2+) serves as cofactor.

It is found in the cytoplasm. It catalyses the reaction RNA(n+1) + phosphate = RNA(n) + a ribonucleoside 5'-diphosphate. Involved in mRNA degradation. Catalyzes the phosphorolysis of single-stranded polyribonucleotides processively in the 3'- to 5'-direction. The sequence is that of Polyribonucleotide nucleotidyltransferase from Porphyromonas gingivalis (strain ATCC 33277 / DSM 20709 / CIP 103683 / JCM 12257 / NCTC 11834 / 2561).